Consider the following 273-residue polypeptide: Photosystem I chlorophyll a/b-binding protein 3-1, chloroplastic (273 aa).

The transit peptide at 1 to 39 directs the protein to the chloroplast; the sequence is MAAQALVSSSLTSSVQTARQIFGSKPVASASQKKSSFVV. Residue Trp-56 participates in chlorophyll b binding. The chlorophyll a site is built by Phe-76, Ser-82, and Glu-100. Arg-105 is a binding site for chlorophyll b. A helical membrane pass occupies residues 106–126; it reads FAMLGAAGAIAPEILGKAGLI. Residue Ile-140 coordinates chlorophyll b. A helical transmembrane segment spans residues 146 to 166; the sequence is YTYWADNYTLFVLEMALMGFA. Chlorophyll b-binding residues include Glu-167 and Arg-170. Ser-195 carries the post-translational modification Phosphoserine. The chlorophyll a site is built by Lys-224, Glu-225, Asn-228, Arg-230, Gln-242, and His-257. Residues 231–251 form a helical membrane-spanning segment; that stretch reads LAMLAILGYFIQGLVTGVGPY. Position 272 (Phe-272) interacts with chlorophyll b.

The protein belongs to the light-harvesting chlorophyll a/b-binding (LHC) protein family. The LHC complex consists of chlorophyll a-b binding proteins. Red-emitting heterodimer with LHCA2. Interacts with LHCA5. Binds to carotenoids. Binds at least 14 chlorophylls (8 Chl-a and 6 Chl-b) and carotenoids such as lutein and neoxanthin. is required as a cofactor. Photoregulated by reversible phosphorylation of its threonine residues.

The protein localises to the plastid. It localises to the chloroplast thylakoid membrane. Its function is as follows. The light-harvesting complex (LHC) functions as a light receptor, it captures and delivers excitation energy to photosystems with which it is closely associated, here photosystem I. In Arabidopsis thaliana (Mouse-ear cress), this protein is Photosystem I chlorophyll a/b-binding protein 3-1, chloroplastic.